The following is a 1026-amino-acid chain: Exportin-T (1026 aa).

It belongs to the exportin family.

The protein localises to the nucleus. It localises to the cytoplasm. Functionally, tRNA nucleus export receptor which facilitates tRNA translocation across the nuclear pore complex. Involved in pre-tRNA splicing, probably by affecting the interaction of pre-tRNA with splicing endonuclease. The sequence is that of Exportin-T (los1) from Neurospora crassa (strain ATCC 24698 / 74-OR23-1A / CBS 708.71 / DSM 1257 / FGSC 987).